A 385-amino-acid polypeptide reads, in one-letter code: S-adenosylmethionine synthase (385 aa).

H16 is an ATP binding site. D18 is a binding site for Mg(2+). E44 lines the K(+) pocket. L-methionine contacts are provided by E57 and Q100. Residues 100 to 110 are flexible loop; it reads QSPDINQGVDR. Residues 164 to 166, 230 to 231, D239, 245 to 246, A262, and K266 each bind ATP; these read DGK, KF, and RK. D239 contributes to the L-methionine binding site. K270 serves as a coordination point for L-methionine.

Belongs to the AdoMet synthase family. Homotetramer; dimer of dimers. Mg(2+) serves as cofactor. It depends on K(+) as a cofactor.

The protein resides in the cytoplasm. The enzyme catalyses L-methionine + ATP + H2O = S-adenosyl-L-methionine + phosphate + diphosphate. It participates in amino-acid biosynthesis; S-adenosyl-L-methionine biosynthesis; S-adenosyl-L-methionine from L-methionine: step 1/1. Its function is as follows. Catalyzes the formation of S-adenosylmethionine (AdoMet) from methionine and ATP. The overall synthetic reaction is composed of two sequential steps, AdoMet formation and the subsequent tripolyphosphate hydrolysis which occurs prior to release of AdoMet from the enzyme. This Helicobacter pylori (strain HPAG1) protein is S-adenosylmethionine synthase.